The chain runs to 398 residues: 1-deoxy-D-xylulose 5-phosphate reductoisomerase (398 aa).

The NADPH site is built by Thr10, Gly11, Ser12, Ile13, Lys37, Asn38, and Asn124. Lys125 is a binding site for 1-deoxy-D-xylulose 5-phosphate. NADPH is bound at residue Glu126. A Mn(2+)-binding site is contributed by Asp150. The 1-deoxy-D-xylulose 5-phosphate site is built by Ser151, Glu152, Ser186, and His209. A Mn(2+)-binding site is contributed by Glu152. Gly215 lines the NADPH pocket. Residues Ser222, Asn227, Lys228, and Glu231 each coordinate 1-deoxy-D-xylulose 5-phosphate. Glu231 contacts Mn(2+).

Belongs to the DXR family. Homodimer. Mg(2+) serves as cofactor. It depends on Mn(2+) as a cofactor.

The catalysed reaction is 2-C-methyl-D-erythritol 4-phosphate + NADP(+) = 1-deoxy-D-xylulose 5-phosphate + NADPH + H(+). It functions in the pathway isoprenoid biosynthesis; isopentenyl diphosphate biosynthesis via DXP pathway; isopentenyl diphosphate from 1-deoxy-D-xylulose 5-phosphate: step 1/6. Functionally, catalyzes the NADPH-dependent rearrangement and reduction of 1-deoxy-D-xylulose-5-phosphate (DXP) to 2-C-methyl-D-erythritol 4-phosphate (MEP). In Buchnera aphidicola subsp. Acyrthosiphon pisum (strain 5A), this protein is 1-deoxy-D-xylulose 5-phosphate reductoisomerase.